The primary structure comprises 553 residues: Zinc finger CCHC domain-containing protein 8 homolog (553 aa).

S59 carries the post-translational modification Phosphoserine. The CCHC-type zinc-finger motif lies at 183 to 200; it reads SSCFNCGDTEHSLRDCTK. 2 positions are modified to phosphoserine: S292 and S347. At Y356 the chain carries Phosphotyrosine. Positions 388–492 are disordered; that stretch reads LEEETEDPPL…APSTPFKASY (105 aa). Residues 395-409 are compositionally biased toward pro residues; that stretch reads PPLPPSVPPPQPPPP. 2 positions are modified to phosphoserine: S421 and S423. Composition is skewed to polar residues over residues 444–456 and 473–485; these read ASHN…SKSP and ESGN…SAPS.

It belongs to the ZCCHC8 family.

The protein resides in the nucleus. Its subcellular location is the nucleoplasm. Scaffolding subunit of the trimeric nuclear exosome targeting (NEXT) complex, a complex that directs a subset of non-coding short-lived RNAs for exosomal degradation. The RNA exosome is fundamental for the degradation of RNA in eukaryotic nuclei. May be involved in pre-mRNA splicing. The sequence is that of Zinc finger CCHC domain-containing protein 8 homolog from Drosophila melanogaster (Fruit fly).